The following is a 92-amino-acid chain: Small ribosomal subunit protein uS19 (92 aa).

Positions 73–92 (EFSPTRSFRGHAGAKNKGRK) are disordered. Residues 80–92 (FRGHAGAKNKGRK) show a composition bias toward basic residues.

This sequence belongs to the universal ribosomal protein uS19 family.

Protein S19 forms a complex with S13 that binds strongly to the 16S ribosomal RNA. In Christiangramia forsetii (strain DSM 17595 / CGMCC 1.15422 / KT0803) (Gramella forsetii), this protein is Small ribosomal subunit protein uS19.